Reading from the N-terminus, the 185-residue chain is Orotate phosphoribosyltransferase (185 aa).

Residues arginine 102, lysine 103, lysine 106, histidine 108, and 128-136 (DDVITTGGS) each bind 5-phospho-alpha-D-ribose 1-diphosphate. Orotate contacts are provided by threonine 132 and arginine 160.

It belongs to the purine/pyrimidine phosphoribosyltransferase family. PyrE subfamily. Homodimer. Mg(2+) is required as a cofactor.

It carries out the reaction orotidine 5'-phosphate + diphosphate = orotate + 5-phospho-alpha-D-ribose 1-diphosphate. Its pathway is pyrimidine metabolism; UMP biosynthesis via de novo pathway; UMP from orotate: step 1/2. Catalyzes the transfer of a ribosyl phosphate group from 5-phosphoribose 1-diphosphate to orotate, leading to the formation of orotidine monophosphate (OMP). The chain is Orotate phosphoribosyltransferase from Leptospira biflexa serovar Patoc (strain Patoc 1 / Ames).